The sequence spans 250 residues: Ribosomal RNA small subunit methyltransferase J (250 aa).

Residues 102–103 (RD), 118–119 (ER), 154–155 (SS), and Asp172 each bind S-adenosyl-L-methionine.

The protein belongs to the methyltransferase superfamily. RsmJ family.

The protein localises to the cytoplasm. The catalysed reaction is guanosine(1516) in 16S rRNA + S-adenosyl-L-methionine = N(2)-methylguanosine(1516) in 16S rRNA + S-adenosyl-L-homocysteine + H(+). Specifically methylates the guanosine in position 1516 of 16S rRNA. This is Ribosomal RNA small subunit methyltransferase J from Edwardsiella ictaluri (strain 93-146).